A 133-amino-acid polypeptide reads, in one-letter code: DNA-binding protein inhibitor ID-2-A (133 aa).

The region spanning 23–75 (ARSKTPVDDPMSLLYNMNDCYSKLKELVPSIPQNKKVSKMEILQHVIDYILDL) is the bHLH domain. Positions 106–115 (LNTDISILSL) match the Nuclear export signal motif.

As to quaternary structure, heterodimer with other HLH proteins. As to expression, in the embryo, expressed in a range of tissues, with primary expression in the developing pronephros; expressed in the pronephric anlage, and by the swimming tadpole stages expressed robustly in the pronephric tubules and weakly in the pronephric duct. Expressed in the secondary heart field. In the developing nervous system, expressed in the neural crest and in the neural folds during neurula stages, and at stage 20 in the neural tube, ventral mesoderm and mid-hindbrain boundary. By early tailbud stages, expressed in the neural tube, somites and branchial arches. In tadpoles (stage 37/38), expressed in the heart, eye, otic vesicle, somites and branchial arches. Also expressed in migrating muscle cells. Expressed at a low level in limbs, with expression decreasing as limbs develop, but expressed at a high level in blastemas (regenerated limbs), where expression is localized primarily to the blastemal epidermis. Widely expressed in adults with highest expression in the spleen, skin, intestine and brain, and at a much lower level in testis and heart.

Its subcellular location is the cytoplasm. It is found in the nucleus. Transcriptional regulator (lacking a basic DNA binding domain) which negatively regulates the basic helix-loop-helix (bHLH) transcription factors by forming heterodimers and inhibiting their DNA binding and transcriptional activity. Inhibits the activity of both neurogenic (neurod1/neuroD) and myogenic (myod1/myoD) bHLH factors. May play a role in the regulation of the circadian clock. This Xenopus laevis (African clawed frog) protein is DNA-binding protein inhibitor ID-2-A (id2-a).